The primary structure comprises 160 residues: Phosphopantetheine adenylyltransferase (160 aa).

T9 lines the substrate pocket. Residues 9 to 10 (TF) and H17 each bind ATP. Residues K41, L73, and R87 each contribute to the substrate site. Residues 88 to 90 (GLR), E98, and 123 to 129 (YSFISST) each bind ATP.

It belongs to the bacterial CoaD family. In terms of assembly, homohexamer. Mg(2+) is required as a cofactor.

It localises to the cytoplasm. The enzyme catalyses (R)-4'-phosphopantetheine + ATP + H(+) = 3'-dephospho-CoA + diphosphate. Its pathway is cofactor biosynthesis; coenzyme A biosynthesis; CoA from (R)-pantothenate: step 4/5. In terms of biological role, reversibly transfers an adenylyl group from ATP to 4'-phosphopantetheine, yielding dephospho-CoA (dPCoA) and pyrophosphate. The sequence is that of Phosphopantetheine adenylyltransferase from Ectopseudomonas mendocina (strain ymp) (Pseudomonas mendocina).